A 273-amino-acid polypeptide reads, in one-letter code: Giardin subunit beta (273 aa).

A nonhelical region region spans residues 1–19; it reads MSMFTSTRTLTQTMDKPDD. A rod region spans residues 20-273; the sequence is LTRSATETAV…GGLSMVTKHQ (254 aa). Coiled-coil stretches lie at residues 123-175 and 211-263; these read DTLN…YDQL and NTKL…SKIQ.

This sequence belongs to the SF-assemblin family. Interacts with BOP1 (via C-terminal WD repeats).

The protein localises to the cytoplasm. It localises to the cytoskeleton. In terms of biological role, giardins are involved in parasite attachment to the intestinal mucosa and in the cytoskeletal disassembly and reassembly that marks the transition from infectious trophozoite to transmissible cyst. They may interact with other cytoskeletal proteins such as microtubules in the microribbons or crossbridges, to maintain the integrity of the ventral disk. The chain is Giardin subunit beta from Giardia intestinalis (Giardia lamblia).